A 504-amino-acid polypeptide reads, in one-letter code: ATP synthase subunit alpha (504 aa).

169–176 (GDRQTGKT) is a binding site for ATP.

This sequence belongs to the ATPase alpha/beta chains family. In terms of assembly, F-type ATPases have 2 components, CF(1) - the catalytic core - and CF(0) - the membrane proton channel. CF(1) has five subunits: alpha(3), beta(3), gamma(1), delta(1), epsilon(1). CF(0) has three main subunits: a(1), b(2) and c(9-12). The alpha and beta chains form an alternating ring which encloses part of the gamma chain. CF(1) is attached to CF(0) by a central stalk formed by the gamma and epsilon chains, while a peripheral stalk is formed by the delta and b chains.

Its subcellular location is the cell membrane. It catalyses the reaction ATP + H2O + 4 H(+)(in) = ADP + phosphate + 5 H(+)(out). Functionally, produces ATP from ADP in the presence of a proton gradient across the membrane. The alpha chain is a regulatory subunit. The chain is ATP synthase subunit alpha from Clostridium botulinum (strain Eklund 17B / Type B).